The chain runs to 696 residues: Elongation factor G (696 aa).

The tr-type G domain occupies 8–290 (ERYRNIGIMA…AVLDYLPSPL (283 aa)). GTP is bound by residues 17-24 (AHIDAGKT), 88-92 (DTPGH), and 142-145 (NKMD).

Belongs to the TRAFAC class translation factor GTPase superfamily. Classic translation factor GTPase family. EF-G/EF-2 subfamily.

The protein resides in the cytoplasm. Functionally, catalyzes the GTP-dependent ribosomal translocation step during translation elongation. During this step, the ribosome changes from the pre-translocational (PRE) to the post-translocational (POST) state as the newly formed A-site-bound peptidyl-tRNA and P-site-bound deacylated tRNA move to the P and E sites, respectively. Catalyzes the coordinated movement of the two tRNA molecules, the mRNA and conformational changes in the ribosome. This Nitrosomonas eutropha (strain DSM 101675 / C91 / Nm57) protein is Elongation factor G.